A 180-amino-acid chain; its full sequence is Large ribosomal subunit protein uL10 (180 aa).

Positions 161–180 (SKAEGSEETESNETTETVEE) are disordered. The span at 166–180 (SEETESNETTETVEE) shows a compositional bias: acidic residues.

It belongs to the universal ribosomal protein uL10 family. As to quaternary structure, part of the ribosomal stalk of the 50S ribosomal subunit. The N-terminus interacts with L11 and the large rRNA to form the base of the stalk. The C-terminus forms an elongated spine to which L12 dimers bind in a sequential fashion forming a multimeric L10(L12)X complex.

Forms part of the ribosomal stalk, playing a central role in the interaction of the ribosome with GTP-bound translation factors. The polypeptide is Large ribosomal subunit protein uL10 (Finegoldia magna (strain ATCC 29328 / DSM 20472 / WAL 2508) (Peptostreptococcus magnus)).